The chain runs to 173 residues: Mediator of RNA polymerase II transcription subunit 10 (173 aa).

Over residues 1–10 the composition is skewed to low complexity; it reads MVQQQQQSQQ. The segment at 1 to 42 is disordered; that stretch reads MVQQQQQSQQRMMELHERNDREKLARKTEKEREEERRKQEDD. Basic and acidic residues predominate over residues 13 to 42; sequence MELHERNDREKLARKTEKEREEERRKQEDD.

It belongs to the Mediator complex subunit 10 family. In terms of assembly, component of the Mediator complex.

It localises to the nucleus. Its function is as follows. Component of the Mediator complex, a coactivator involved in the regulated transcription of nearly all RNA polymerase II-dependent genes. Mediator functions as a bridge to convey information from gene-specific regulatory proteins to the basal RNA polymerase II transcription machinery. Mediator is recruited to promoters by direct interactions with regulatory proteins and serves as a scaffold for the assembly of a functional preinitiation complex with RNA polymerase II and the general transcription factors. Required for germ cell development and for transcriptional activation of certain stage-specific inducible promoters. This chain is Mediator of RNA polymerase II transcription subunit 10 (mdt-10), found in Caenorhabditis elegans.